The sequence spans 96 residues: Aspartyl/glutamyl-tRNA(Asn/Gln) amidotransferase subunit C (96 aa).

The protein belongs to the GatC family. As to quaternary structure, heterotrimer of A, B and C subunits.

The catalysed reaction is L-glutamyl-tRNA(Gln) + L-glutamine + ATP + H2O = L-glutaminyl-tRNA(Gln) + L-glutamate + ADP + phosphate + H(+). The enzyme catalyses L-aspartyl-tRNA(Asn) + L-glutamine + ATP + H2O = L-asparaginyl-tRNA(Asn) + L-glutamate + ADP + phosphate + 2 H(+). Allows the formation of correctly charged Asn-tRNA(Asn) or Gln-tRNA(Gln) through the transamidation of misacylated Asp-tRNA(Asn) or Glu-tRNA(Gln) in organisms which lack either or both of asparaginyl-tRNA or glutaminyl-tRNA synthetases. The reaction takes place in the presence of glutamine and ATP through an activated phospho-Asp-tRNA(Asn) or phospho-Glu-tRNA(Gln). The sequence is that of Aspartyl/glutamyl-tRNA(Asn/Gln) amidotransferase subunit C from Chloroflexus aurantiacus (strain ATCC 29366 / DSM 635 / J-10-fl).